Consider the following 348-residue polypeptide: DNA-directed RNA polymerase subunit alpha (348 aa).

The tract at residues 1–243 (MLIKQGDRLI…DQISVFINFD (243 aa)) is alpha N-terminal domain (alpha-NTD). Residues 260–348 (VNENLFKGID…WLKRKQQNEA (89 aa)) are alpha C-terminal domain (alpha-CTD).

It belongs to the RNA polymerase alpha chain family. In terms of assembly, homodimer. The RNAP catalytic core consists of 2 alpha, 1 beta, 1 beta' and 1 omega subunit. When a sigma factor is associated with the core the holoenzyme is formed, which can initiate transcription.

The enzyme catalyses RNA(n) + a ribonucleoside 5'-triphosphate = RNA(n+1) + diphosphate. In terms of biological role, DNA-dependent RNA polymerase catalyzes the transcription of DNA into RNA using the four ribonucleoside triphosphates as substrates. The protein is DNA-directed RNA polymerase subunit alpha of Oleidesulfovibrio alaskensis (strain ATCC BAA-1058 / DSM 17464 / G20) (Desulfovibrio alaskensis).